A 457-amino-acid polypeptide reads, in one-letter code: Serine--tRNA ligase (457 aa).

252–254 (TAE) lines the L-serine pocket. ATP contacts are provided by residues 283 to 285 (RKE) and V299. E306 is a binding site for L-serine. 370 to 373 (EMVS) contacts ATP. T406 contacts L-serine.

It belongs to the class-II aminoacyl-tRNA synthetase family. Type-1 seryl-tRNA synthetase subfamily. As to quaternary structure, homodimer. The tRNA molecule binds across the dimer.

Its subcellular location is the cytoplasm. It catalyses the reaction tRNA(Ser) + L-serine + ATP = L-seryl-tRNA(Ser) + AMP + diphosphate + H(+). It carries out the reaction tRNA(Sec) + L-serine + ATP = L-seryl-tRNA(Sec) + AMP + diphosphate + H(+). The protein operates within aminoacyl-tRNA biosynthesis; selenocysteinyl-tRNA(Sec) biosynthesis; L-seryl-tRNA(Sec) from L-serine and tRNA(Sec): step 1/1. In terms of biological role, catalyzes the attachment of serine to tRNA(Ser). Is also able to aminoacylate tRNA(Sec) with serine, to form the misacylated tRNA L-seryl-tRNA(Sec), which will be further converted into selenocysteinyl-tRNA(Sec). In Saccharolobus islandicus (strain Y.N.15.51 / Yellowstone #2) (Sulfolobus islandicus), this protein is Serine--tRNA ligase.